The chain runs to 315 residues: MLEIEKPKIECVESTEDGSYGRFVVEPLERGYGITLGNSLRRILLSSLPGVAANSVRIEGVLHEFSTVKGVKEDVTELILNIKALCLKMEGEDSKVIYIDAHGPGEVTGADIRTDGSVEVINKDLHIATLDEDGKLYMEIEVNRGRGYVTQNKNKRDDMPIGTIAVDSIYSPIKRVNFTVENTRVAQITDYDKLTIEVWGNGTIRPEEAISLAAKILIEHFKLFMTLTDHADDVEIMVEKEEDKKEKVLEMTIEELDLSVRSYNCLKRAGINTVQELTQRSMEDMMKVRNLGRKSLEEVEQKLKALGLSLKLNDE.

Residues 1–228 (MLEIEKPKIE…EHFKLFMTLT (228 aa)) form an alpha N-terminal domain (alpha-NTD) region. The tract at residues 245 to 315 (KEKVLEMTIE…LGLSLKLNDE (71 aa)) is alpha C-terminal domain (alpha-CTD).

This sequence belongs to the RNA polymerase alpha chain family. Homodimer. The RNAP catalytic core consists of 2 alpha, 1 beta, 1 beta' and 1 omega subunit. When a sigma factor is associated with the core the holoenzyme is formed, which can initiate transcription.

The catalysed reaction is RNA(n) + a ribonucleoside 5'-triphosphate = RNA(n+1) + diphosphate. DNA-dependent RNA polymerase catalyzes the transcription of DNA into RNA using the four ribonucleoside triphosphates as substrates. The sequence is that of DNA-directed RNA polymerase subunit alpha from Clostridium acetobutylicum (strain ATCC 824 / DSM 792 / JCM 1419 / IAM 19013 / LMG 5710 / NBRC 13948 / NRRL B-527 / VKM B-1787 / 2291 / W).